The primary structure comprises 386 residues: uncharacterized protein (386 aa).

An F-box domain is found at K29–E76.

This is an uncharacterized protein from Caenorhabditis elegans.